The following is a 121-amino-acid chain: Large ribosomal subunit protein uL14 (121 aa).

The protein belongs to the universal ribosomal protein uL14 family. In terms of assembly, part of the 50S ribosomal subunit. Forms a cluster with proteins L3 and L19. In the 70S ribosome, L14 and L19 interact and together make contacts with the 16S rRNA in bridges B5 and B8.

Binds to 23S rRNA. Forms part of two intersubunit bridges in the 70S ribosome. This Pseudoalteromonas atlantica (strain T6c / ATCC BAA-1087) protein is Large ribosomal subunit protein uL14.